We begin with the raw amino-acid sequence, 575 residues long: Arginine--tRNA ligase (575 aa).

The 'HIGH' region signature appears at 131-141 (ANPTGPLHVGH).

This sequence belongs to the class-I aminoacyl-tRNA synthetase family. In terms of assembly, monomer.

It is found in the cytoplasm. It catalyses the reaction tRNA(Arg) + L-arginine + ATP = L-arginyl-tRNA(Arg) + AMP + diphosphate. This Jannaschia sp. (strain CCS1) protein is Arginine--tRNA ligase.